We begin with the raw amino-acid sequence, 644 residues long: Low affinity sulfate transporter 3 (644 aa).

Positions 1–19 are enriched in polar residues; sequence MSSLGTEQFSERSQWVLNS. Residues 1-20 form a disordered region; it reads MSSLGTEQFSERSQWVLNSP. 13 helical membrane passes run 50-70, 76-96, 99-119, 124-144, 156-176, 179-199, 242-262, 268-288, 328-348, 394-414, 418-438, 455-475, and 518-538; these read AVSFLASLFPILSWIRTYSAT, LLSGLTLASLSIPQSIGYANL, LDPQYGLYTSVIPPVIYALMG, IAIGPVAVVSMLLSSLVPKVI, LVFTVTLFAGIFQTAFGVLRL, LVDFLSHAALVGFMAGAAIVI, PLNFVIGCSFLIFLLAARFIG, FFWLPAIAPLLSVILSTLIVF, IGLISAIIALTEAIAVGRSFA, CKTAVSNIVMAVTVLLCLELF, LYYTPMAILASIILSALPGLI, LACLGAFFGVLFVSIEIGLLI, and PGILVIRISSGSLCFANAGFV. An STAS domain is found at 511–635; that stretch reads YPMAVTTPGI…LTVAEAVDAC (125 aa).

It belongs to the SLC26A/SulP transporter (TC 2.A.53) family.

Its subcellular location is the membrane. In terms of biological role, low-affinity H(+)/sulfate cotransporter which may be involved in the internal transport of sulfate between cellular or subcellular compartments within the plant. The polypeptide is Low affinity sulfate transporter 3 (ST3) (Stylosanthes hamata (Caribbean stylo)).